A 192-amino-acid chain; its full sequence is Pyridoxine/pyridoxamine 5'-phosphate oxidase (192 aa).

FMN-binding positions include 41 to 46, 56 to 57, R62, K63, and Q85; these read RMMLLK and FT. A substrate-binding site is contributed by K46. Substrate-binding residues include Y103, R107, and S111. FMN is bound by residues 120 to 121 and W165; that span reads QS. Residue 171-173 participates in substrate binding; sequence RLH. R175 lines the FMN pocket.

This sequence belongs to the pyridoxamine 5'-phosphate oxidase family. As to quaternary structure, homodimer. It depends on FMN as a cofactor.

It carries out the reaction pyridoxamine 5'-phosphate + O2 + H2O = pyridoxal 5'-phosphate + H2O2 + NH4(+). The catalysed reaction is pyridoxine 5'-phosphate + O2 = pyridoxal 5'-phosphate + H2O2. The protein operates within cofactor metabolism; pyridoxal 5'-phosphate salvage; pyridoxal 5'-phosphate from pyridoxamine 5'-phosphate: step 1/1. It participates in cofactor metabolism; pyridoxal 5'-phosphate salvage; pyridoxal 5'-phosphate from pyridoxine 5'-phosphate: step 1/1. Functionally, catalyzes the oxidation of either pyridoxine 5'-phosphate (PNP) or pyridoxamine 5'-phosphate (PMP) into pyridoxal 5'-phosphate (PLP). This is Pyridoxine/pyridoxamine 5'-phosphate oxidase from Zymomonas mobilis subsp. mobilis (strain ATCC 31821 / ZM4 / CP4).